The chain runs to 255 residues: MLKIGDKEFKSRLFTGTGKFSNSHLMAEAIQVSGSQLATMALKRVDVHDQQDDILQPLIHAGVNLLPNTSGAKNAKDAVFAAQLAREALGTNWVKLEIHPDPKYLMPDPIETLAAAEQLVRDGFIVLPYCHADPVLCKRLEEVGCAAVMPLGAPIGSNKGIASHDFLEIIIDQANVPVVVDAGIGAPSHAARAMEMGADAVLVNTAIAAASNPVAMAKAFKMAVESGRMAYKAGLAGKVSHAVASSPLTAFLDEL.

The active-site Schiff-base intermediate with DXP is the Lys95. 1-deoxy-D-xylulose 5-phosphate-binding positions include Gly156, Ala182–Gly183, and Asn204–Thr205.

The protein belongs to the ThiG family. As to quaternary structure, homotetramer. Forms heterodimers with either ThiH or ThiS.

The protein localises to the cytoplasm. The enzyme catalyses [ThiS sulfur-carrier protein]-C-terminal-Gly-aminoethanethioate + 2-iminoacetate + 1-deoxy-D-xylulose 5-phosphate = [ThiS sulfur-carrier protein]-C-terminal Gly-Gly + 2-[(2R,5Z)-2-carboxy-4-methylthiazol-5(2H)-ylidene]ethyl phosphate + 2 H2O + H(+). The protein operates within cofactor biosynthesis; thiamine diphosphate biosynthesis. Functionally, catalyzes the rearrangement of 1-deoxy-D-xylulose 5-phosphate (DXP) to produce the thiazole phosphate moiety of thiamine. Sulfur is provided by the thiocarboxylate moiety of the carrier protein ThiS. In vitro, sulfur can be provided by H(2)S. In Vibrio parahaemolyticus serotype O3:K6 (strain RIMD 2210633), this protein is Thiazole synthase.